Reading from the N-terminus, the 505-residue chain is Activin receptor type-1B (505 aa).

An N-terminal signal peptide occupies residues 1–23 (MAESAGASSFFPLVVLLLAGSGG). The Extracellular portion of the chain corresponds to 24–126 (SGPRGIQALL…EHPSMWGPVE (103 aa)). A glycan (N-linked (GlcNAc...) asparagine) is linked at Asn43. The chain crosses the membrane as a helical span at residues 127–149 (LVGIIAGPVFLLFLIIIIVFLVI). Topologically, residues 150–505 (NYHQRVYHNR…QLSVQEDVKI (356 aa)) are cytoplasmic. The GS domain maps to 177–206 (KTLQDLVYDLSTSGSGSGLPLFVQRTVART). The region spanning 207–497 (IVLQEIIGKG…LRIKKTLSQL (291 aa)) is the Protein kinase domain. ATP is bound by residues 213–221 (IGKGRFGEV) and Lys234. Asp335 functions as the Proton acceptor in the catalytic mechanism. Position 380 is a phosphotyrosine (Tyr380).

It belongs to the protein kinase superfamily. TKL Ser/Thr protein kinase family. TGFB receptor subfamily. As to quaternary structure, forms an activin receptor complex with activin receptor type-2 (ACVR2A or ACVR2B). Part of a complex consisting of MAGI2/ARIP1, ACVR2A, ACVR1B and SMAD3. Interacts with SMAD2 and SMAD3. Interacts with SMAD7. Interacts with FKBP1A. Interacts with IGSF1. Interacts with CRIPTO. Interacts with TDP2. Interacts with TSC22D1/TSC-22. Mg(2+) serves as cofactor. Requires Mn(2+) as cofactor. Post-translationally, autophosphorylated. Phosphorylated by activin receptor type-2 (ACVR2A or ACVR2B) in response to activin-binding at serine and threonine residues in the GS domain. Phosphorylation of ACVR1B by activin receptor type-2 regulates association with SMAD7. In terms of processing, ubiquitinated. Level of ubiquitination is regulated by the SMAD7-SMURF1 complex. Ubiquitinated. In terms of tissue distribution, urogenital ridge, testis, ovary, brain and lungs.

The protein localises to the cell membrane. It carries out the reaction L-threonyl-[receptor-protein] + ATP = O-phospho-L-threonyl-[receptor-protein] + ADP + H(+). The enzyme catalyses L-seryl-[receptor-protein] + ATP = O-phospho-L-seryl-[receptor-protein] + ADP + H(+). Its activity is regulated as follows. Activin receptor type-2 (ACVR2A or ACVR2B) activates the type-1 receptor through phosphorylation of its regulatory GS domain. Functionally, transmembrane serine/threonine kinase activin type-1 receptor forming an activin receptor complex with activin receptor type-2 (ACVR2A or ACVR2B). Transduces the activin signal from the cell surface to the cytoplasm and is thus regulating a many physiological and pathological processes including neuronal differentiation and neuronal survival, hair follicle development and cycling, FSH production by the pituitary gland, wound healing, extracellular matrix production, immunosuppression and carcinogenesis. Activin is also thought to have a paracrine or autocrine role in follicular development in the ovary. Within the receptor complex, type-2 receptors (ACVR2A and/or ACVR2B) act as a primary activin receptors whereas the type-1 receptors like ACVR1B act as downstream transducers of activin signals. Activin binds to type-2 receptor at the plasma membrane and activates its serine-threonine kinase. The activated receptor type-2 then phosphorylates and activates the type-1 receptor such as ACVR1B. Once activated, the type-1 receptor binds and phosphorylates the SMAD proteins SMAD2 and SMAD3, on serine residues of the C-terminal tail. Soon after their association with the activin receptor and subsequent phosphorylation, SMAD2 and SMAD3 are released into the cytoplasm where they interact with the common partner SMAD4. This SMAD complex translocates into the nucleus where it mediates activin-induced transcription. Inhibitory SMAD7, which is recruited to ACVR1B through FKBP1A, can prevent the association of SMAD2 and SMAD3 with the activin receptor complex, thereby blocking the activin signal. Activin signal transduction is also antagonized by the binding to the receptor of inhibin-B via the IGSF1 inhibin coreceptor. ACVR1B also phosphorylates TDP2. The sequence is that of Activin receptor type-1B (Acvr1b) from Rattus norvegicus (Rat).